The chain runs to 270 residues: Glutamate racemase (270 aa).

Substrate is bound by residues 15–16 (DS) and 47–48 (YG). Residue Cys-78 is the Proton donor/acceptor of the active site. Substrate is bound at residue 79–80 (NT). Residue Cys-189 is the Proton donor/acceptor of the active site. 190 to 191 (TH) contacts substrate.

The protein belongs to the aspartate/glutamate racemases family.

The enzyme catalyses L-glutamate = D-glutamate. It functions in the pathway cell wall biogenesis; peptidoglycan biosynthesis. In terms of biological role, provides the (R)-glutamate required for cell wall biosynthesis. This is Glutamate racemase from Syntrophus aciditrophicus (strain SB).